The following is a 278-amino-acid chain: Putative non-heme haloperoxidase (278 aa).

Residues 24–240 (PLVFLHGLSV…STAKITNASF (217 aa)) form the AB hydrolase-1 domain. Residues Ser-97 and Asp-221 contribute to the active site.

It belongs to the AB hydrolase superfamily.

This is Putative non-heme haloperoxidase (59.2) from Mycobacterium (Mycobacteriophage D29).